The sequence spans 211 residues: Uracil phosphoribosyltransferase (211 aa).

5-phospho-alpha-D-ribose 1-diphosphate-binding positions include arginine 78, arginine 103, and 130–138; that span reads DPMLATGGT. Uracil contacts are provided by residues isoleucine 196 and 201-203; that span reads GDA. Aspartate 202 is a binding site for 5-phospho-alpha-D-ribose 1-diphosphate.

The protein belongs to the UPRTase family. Mg(2+) serves as cofactor.

The catalysed reaction is UMP + diphosphate = 5-phospho-alpha-D-ribose 1-diphosphate + uracil. The protein operates within pyrimidine metabolism; UMP biosynthesis via salvage pathway; UMP from uracil: step 1/1. Allosterically activated by GTP. Catalyzes the conversion of uracil and 5-phospho-alpha-D-ribose 1-diphosphate (PRPP) to UMP and diphosphate. The protein is Uracil phosphoribosyltransferase of Kineococcus radiotolerans (strain ATCC BAA-149 / DSM 14245 / SRS30216).